We begin with the raw amino-acid sequence, 441 residues long: Xaa-Pro dipeptidase (441 aa).

Positions 244, 255, 336, 381, and 420 each coordinate Mn(2+).

Belongs to the peptidase M24B family. Bacterial-type prolidase subfamily. Mn(2+) is required as a cofactor.

It carries out the reaction Xaa-L-Pro dipeptide + H2O = an L-alpha-amino acid + L-proline. Functionally, splits dipeptides with a prolyl residue in the C-terminal position. The sequence is that of Xaa-Pro dipeptidase from Xanthomonas campestris pv. campestris (strain 8004).